Reading from the N-terminus, the 95-residue chain is Aspartyl/glutamyl-tRNA(Asn/Gln) amidotransferase subunit C (95 aa).

This sequence belongs to the GatC family. In terms of assembly, heterotrimer of A, B and C subunits.

The catalysed reaction is L-glutamyl-tRNA(Gln) + L-glutamine + ATP + H2O = L-glutaminyl-tRNA(Gln) + L-glutamate + ADP + phosphate + H(+). It catalyses the reaction L-aspartyl-tRNA(Asn) + L-glutamine + ATP + H2O = L-asparaginyl-tRNA(Asn) + L-glutamate + ADP + phosphate + 2 H(+). Its function is as follows. Allows the formation of correctly charged Asn-tRNA(Asn) or Gln-tRNA(Gln) through the transamidation of misacylated Asp-tRNA(Asn) or Glu-tRNA(Gln) in organisms which lack either or both of asparaginyl-tRNA or glutaminyl-tRNA synthetases. The reaction takes place in the presence of glutamine and ATP through an activated phospho-Asp-tRNA(Asn) or phospho-Glu-tRNA(Gln). This chain is Aspartyl/glutamyl-tRNA(Asn/Gln) amidotransferase subunit C, found in Thermodesulfovibrio yellowstonii (strain ATCC 51303 / DSM 11347 / YP87).